Here is a 558-residue protein sequence, read N- to C-terminus: Protein SET DOMAIN GROUP 41 (558 aa).

Positions 115–249 (PSISVAIHHA…SGEEITVSYI (135 aa)) constitute an SET domain.

This sequence belongs to the class V-like SAM-binding methyltransferase superfamily.

The chain is Protein SET DOMAIN GROUP 41 (SDG41) from Arabidopsis thaliana (Mouse-ear cress).